Here is a 388-residue protein sequence, read N- to C-terminus: Putative nickel insertion protein (388 aa).

The protein belongs to the LarC family.

The chain is Putative nickel insertion protein from Syntrophobacter fumaroxidans (strain DSM 10017 / MPOB).